We begin with the raw amino-acid sequence, 316 residues long: MPTKGDYQPPKDGILSKLPESAVPYGELLRIHRPLGYYLNISPYVVGVAYTAAISPVTLPSTFLLGRLVILSLWGFCIRSAGCAWNDLIDMDIDRQVSRTKLRPLPRGAVSPSGAALLAAFMFGCGGSLLLLLPSQCAFEAAIVVFFALLYPFGKRFSDHPQLILTNIAWAIPMAMSSLDMSPLDFPIPTLAMSFSIASVIVMIDIVYACQDAEEDKKVGARSMAVRYMEITDQIAYGLFFSGTLSLLVGGILRGLGFPFLIFSVGGHFLGFLRFLRASLGKGAKSALVESQAKSSCLLATMLLVFGLCFEYCVRL.

The next 9 membrane-spanning stretches (helical) occupy residues 45–65 (VVGV…TFLL), 69–89 (VILS…NDLI), 114–134 (GAAL…LLLP), 135–155 (SQCA…PFGK), 163–183 (LILT…DMSP), 188–208 (IPTL…DIVY), 231–253 (ITDQ…GGIL), 257–276 (GFPF…LRFL), and 296–316 (SCLL…CVRL).

Belongs to the UbiA prenyltransferase family. The cofactor is Mg(2+).

Its subcellular location is the membrane. It catalyses the reaction 3,5-dimethylorsellinate + (2E,6E)-farnesyl diphosphate = (3R)-3-farnesyl-6-hydroxy-2,3,5-trimethyl-4-oxocyclohexa-1,5-diene-1-carboxylate + diphosphate + H(+). It functions in the pathway secondary metabolite biosynthesis; terpenoid biosynthesis. Functionally, polyprenyl transferase; part of the gene cluster that mediates the biosynthesis of paraherquonin, a meroterpenoid with a unique, highly congested hexacyclic molecular architecture. The first step of the pathway is the synthesis of 3,5-dimethylorsellinic acid (DMOA) by the polyketide synthase prhL. Synthesis of DMOA is followed by farnesylation by the prenyltransferase prhE, methylesterification by the methyl-transferase prhM, epoxidation of the prenyl chain by the flavin-dependent monooxygenase prhF, and cyclization of the farnesyl moiety by the terpene cyclase prhH, to yield the tetracyclic intermediate, protoaustinoid A. The short chain dehydrogenase prhI then oxidizes the C-3 alcohol group of the terpene cyclase product to transform protoaustinoid A into protoaustinoid B. The FAD-binding monooxygenase prhJ catalyzes the oxidation of protoaustinoid B into preaustinoid A which is further oxidized into preaustinoid A1 by FAD-binding monooxygenase phrK. Finally, prhA leads to berkeleydione via the berkeleyone B intermediate. PrhA is a multifunctional dioxygenase that first desaturates at C5-C6 to form berkeleyone B, followed by rearrangement of the A/B-ring to form the cycloheptadiene moiety in berkeleydione. Berkeleydione serves as the key intermediate for the biosynthesis of paraherquonin as well as many other meroterpenoids. The cytochrome P450 monooxygenases prhB, prhD, and prhN, as well as the isomerase prhC, are probably involved in the late stage of paraherquonin biosynthesis, after the production of berkeleydione. Especially prhC might be a multifunctional enzyme that catalyzes the D-ring expansion via intramolecular methoxy rearrangement, as well as the hydrolysis of the expanded D-ring. The chain is Polyprenyl transferase prhE from Penicillium brasilianum.